The chain runs to 84 residues: Dolichol phosphate-mannose biosynthesis regulatory protein (84 aa).

A run of 2 helical transmembrane segments spans residues 11–31 and 49–69; these read FGLVAVSLIIFTYYTTWVILL and YAVLLPLAAGLLLLLFVGLFI.

Belongs to the DPM2 family. As to quaternary structure, component of the dolichol-phosphate mannose (DPM) synthase complex composed of DPM1, DPM2 and DPM3; in the complex interacts directly with DPM3. Component of the glycosylphosphatidylinositol-N-acetylglucosaminyltransferase (GPI-GnT) complex composed at least by PIGA, PIGC, PIGH, PIGP, PIGQ, PIGY and DPM2. Interacts with PIGA, PIGC and PIGQ.

The protein resides in the endoplasmic reticulum membrane. It functions in the pathway protein modification; protein glycosylation. Regulates the biosynthesis of dolichol phosphate-mannose. Regulatory subunit of the dolichol-phosphate mannose (DPM) synthase complex; essential for the ER localization and stable expression of DPM1. Part of the glycosylphosphatidylinositol-N-acetylglucosaminyltransferase (GPI-GnT) complex that catalyzes the transfer of N-acetylglucosamine from UDP-N-acetylglucosamine to phosphatidylinositol and participates in the first step of GPI biosynthesis. May act by regulating the GPI-GNT complex. This Rattus norvegicus (Rat) protein is Dolichol phosphate-mannose biosynthesis regulatory protein.